Consider the following 370-residue polypeptide: 3-isopropylmalate dehydrogenase (370 aa).

77–90 (GPKWDAVPYDARPE) contributes to the NAD(+) binding site. Residues Arg97, Arg107, Arg135, and Asp226 each coordinate substrate. 3 residues coordinate Mg(2+): Asp226, Asp250, and Asp254. Residue 290-302 (GSAPDIAGKGLAN) coordinates NAD(+).

The protein belongs to the isocitrate and isopropylmalate dehydrogenases family. LeuB type 1 subfamily. In terms of assembly, homodimer. Mg(2+) is required as a cofactor. Mn(2+) serves as cofactor.

It is found in the cytoplasm. It catalyses the reaction (2R,3S)-3-isopropylmalate + NAD(+) = 4-methyl-2-oxopentanoate + CO2 + NADH. It participates in amino-acid biosynthesis; L-leucine biosynthesis; L-leucine from 3-methyl-2-oxobutanoate: step 3/4. Its function is as follows. Catalyzes the oxidation of 3-carboxy-2-hydroxy-4-methylpentanoate (3-isopropylmalate) to 3-carboxy-4-methyl-2-oxopentanoate. The product decarboxylates to 4-methyl-2 oxopentanoate. The chain is 3-isopropylmalate dehydrogenase from Rhodopseudomonas palustris (strain HaA2).